The sequence spans 769 residues: Serine/threonine-protein kinase PLK4 (769 aa).

The Protein kinase domain maps to 10 to 263 (YEVYEILGKG…LDQVLQHPFM (254 aa)). ATP is bound by residues 16-24 (LGKGGFASV) and K39. The active-site Proton acceptor is D134. Disordered stretches follow at residues 280 to 304 (SSDS…SSYG), 337 to 380 (PQQR…LDIP), and 592 to 651 (APLT…VLSS). Over residues 337–371 (PQQRPQSASHNKPTSDFFSGISNDPRTMAPSSPTK) the composition is skewed to polar residues. One can recognise a Cryptic POLO box 1 (CPB1) domain in the interval 374-491 (KKRLDIPPLN…ARFVQMVKAK (118 aa)). The 104-residue stretch at 492-595 (TPKITYYSEK…GRRPANAPLT (104 aa)) folds into the Cryptic POLO box 2 (CPB2) domain. Residues 605-648 (TKENQLYSNISSPNTPQTPHQMPSFAMSTASHTSAGNPLTQRPV) are compositionally biased toward polar residues. A POLO box domain is found at 662–745 (AMKKCTIAGV…MPAILRELNA (84 aa)).

Belongs to the protein kinase superfamily. Ser/Thr protein kinase family. CDC5/Polo subfamily. As to quaternary structure, homodimer. Ubiquitinated; leading to its degradation by the proteasome.

The protein localises to the cytoplasm. The protein resides in the cytoskeleton. It is found in the microtubule organizing center. It localises to the centrosome. Its subcellular location is the centriole. The enzyme catalyses L-seryl-[protein] + ATP = O-phospho-L-seryl-[protein] + ADP + H(+). It catalyses the reaction L-threonyl-[protein] + ATP = O-phospho-L-threonyl-[protein] + ADP + H(+). Its function is as follows. Serine/threonine-protein kinase that plays a central role in centriole duplication. Able to trigger procentriole formation on the surface of the mother centriole cylinder, leading to the recruitment of centriole biogenesis proteins. When overexpressed, it is able to induce centrosome amplification through the simultaneous generation of multiple procentrioles adjoining each parental centriole during S phase. The polypeptide is Serine/threonine-protein kinase PLK4 (SAK) (Aedes aegypti (Yellowfever mosquito)).